The following is a 562-amino-acid chain: Autophagy-related protein 18 (562 aa).

The disordered stretch occupies residues 1–22; it reads MLKNQSNSVHVDGSHNNSSNYN. WD repeat units lie at residues 246-286 and 291-330; these read AHKS…KLYQ and TYPTKIFTLSFSFDNKYVLATSSSGTVHIFRLGEEESLEN. Residues 287 to 291 carry the L/FRRG motif motif; sequence FRRGT. Residues 327-425 are disordered; that stretch reads SLENKHKRKR…NKDNKSEPLI (99 aa). Residues 331–342 show a composition bias toward basic residues; it reads KHKRKRNSKKLK. Residues 349-386 show a composition bias toward acidic residues; that stretch reads TITEENENEIQKDDAEDDDIIQDDGDDSDADDDDDESL. Residues 399–413 show a composition bias toward low complexity; the sequence is DSNNSFTSFNSAFSN. Residues 414–423 show a composition bias toward basic and acidic residues; it reads DDNKDNKSEP.

It belongs to the WD repeat PROPPIN family. As to quaternary structure, component of the PI(3,5)P2 regulatory complex.

The protein resides in the preautophagosomal structure membrane. It is found in the vacuole membrane. The protein localises to the endosome membrane. The PI(3,5)P2 regulatory complex regulates both the synthesis and turnover of phosphatidylinositol 3,5-bisphosphate (PtdIns(3,5)P2). Necessary for proper vacuole morphology. Plays an important role in osmotically-induced vacuole fragmentation. Required for cytoplasm to vacuole transport (Cvt) vesicle formation, pexophagy and starvation-induced autophagy. Involved in correct ATG9 trafficking to the pre-autophagosomal structure. Might also be involved in premeiotic DNA replication. The chain is Autophagy-related protein 18 (ATG18) from Debaryomyces hansenii (strain ATCC 36239 / CBS 767 / BCRC 21394 / JCM 1990 / NBRC 0083 / IGC 2968) (Yeast).